The following is a 406-amino-acid chain: DNA repair protein RAD55 (406 aa).

Position 43-50 (43-50) interacts with ATP; sequence GPPGIGKT. The interval 385–406 is disordered; that stretch reads DSNDNPLPNAEGKEEIIYDSEG.

It belongs to the RecA family. RAD55 subfamily.

The protein resides in the nucleus. Functionally, required for radiation resistance and meiotic viability and presumably acts in recombination and recombinational DNA repair pathways. This chain is DNA repair protein RAD55 (RAD55), found in Saccharomyces cerevisiae (strain ATCC 204508 / S288c) (Baker's yeast).